The sequence spans 400 residues: Gap junction alpha-8 protein (400 aa).

The stretch at 2–12 (GDWSFLGNILE) is an intramembrane region. Topologically, residues 13-21 (QVNEQSTVI) are cytoplasmic. Residues 22 to 42 (GRVWLTVLFIFRILILGTAAE) traverse the membrane as a helical segment. Topologically, residues 43–71 (LVWGDEQSDFVCNTQQPGCENVCYDEAFP) are extracellular. Disulfide bonds link C54–C196, C61–C190, and C65–C185. The helical transmembrane segment at 72 to 92 (ISHIRLWVLQIIFVSTPSLVY) threads the bilayer. The Cytoplasmic portion of the chain corresponds to 93–156 (FGHAVHHVRM…GTLLRTYILH (64 aa)). Basic and acidic residues predominate over residues 104-118 (EKRKEREEAERRQQA). Residues 104-139 (EKRKEREEAERRQQAEVDEEKLPLAPNQNKGNNPDG) are disordered. The segment covering 129-138 (PNQNKGNNPD) has biased composition (polar residues). Residues 157 to 177 (IIFKTLFEVGFIVGQYFLYGF) form a helical membrane-spanning segment. Residues 178–205 (RILPLYRCGRWPCPNLVDCFVSRPTEKT) are Extracellular-facing. A helical membrane pass occupies residues 206–226 (IFIMFMLVVAAVSLFLNLVEI). Residues 227–400 (SHLILKRIRR…SRARSDDLTV (174 aa)) lie on the Cytoplasmic side of the membrane. Residues 323 to 400 (YAQAKEPEEE…SRARSDDLTV (78 aa)) form a disordered region. The span at 327 to 336 (KEPEEEKVKA) shows a compositional bias: basic and acidic residues. Positions 337-346 (EEEEEQEEEQ) are enriched in acidic residues. The residue at position 364 (S364) is a Phosphoserine; by CK2. Positions 381-392 (RSLSRLSKASSR) are enriched in low complexity.

Belongs to the connexin family. Alpha-type (group II) subfamily. As to quaternary structure, a hemichannel or connexon is composed of a hexamer of connexins. A functional gap junction is formed by the apposition of two hemichannels. Forms heteromeric channels with GJA3. During early stages of lens development, interacts with the C-terminus of MIP. Proteolytically cleaved by caspase-3 during lens development. In terms of processing, phosphorylated on Ser-364; which inhibits cleavage by caspase-3.

Its subcellular location is the cell membrane. The protein localises to the cell junction. The protein resides in the gap junction. Its function is as follows. Structural component of eye lens gap junctions. Gap junctions are dodecameric channels that connect the cytoplasm of adjoining cells. They are formed by the docking of two hexameric hemichannels, one from each cell membrane. Small molecules and ions diffuse from one cell to a neighboring cell via the central pore. The chain is Gap junction alpha-8 protein (GJA8) from Gallus gallus (Chicken).